The following is a 184-amino-acid chain: ATP synthase subunit b, chloroplastic (184 aa).

The chain crosses the membrane as a helical span at residues 27-49 (LATNPINLSVVLGVLIFFGKGVL).

It belongs to the ATPase B chain family. In terms of assembly, F-type ATPases have 2 components, F(1) - the catalytic core - and F(0) - the membrane proton channel. F(1) has five subunits: alpha(3), beta(3), gamma(1), delta(1), epsilon(1). F(0) has four main subunits: a(1), b(1), b'(1) and c(10-14). The alpha and beta chains form an alternating ring which encloses part of the gamma chain. F(1) is attached to F(0) by a central stalk formed by the gamma and epsilon chains, while a peripheral stalk is formed by the delta, b and b' chains.

It is found in the plastid. Its subcellular location is the chloroplast thylakoid membrane. Its function is as follows. F(1)F(0) ATP synthase produces ATP from ADP in the presence of a proton or sodium gradient. F-type ATPases consist of two structural domains, F(1) containing the extramembraneous catalytic core and F(0) containing the membrane proton channel, linked together by a central stalk and a peripheral stalk. During catalysis, ATP synthesis in the catalytic domain of F(1) is coupled via a rotary mechanism of the central stalk subunits to proton translocation. Functionally, component of the F(0) channel, it forms part of the peripheral stalk, linking F(1) to F(0). This Gossypium barbadense (Sea Island cotton) protein is ATP synthase subunit b, chloroplastic.